Reading from the N-terminus, the 335-residue chain is dTDP-glucose 4,6-dehydratase (335 aa).

NAD(+)-binding positions include 11-12 (FI), 38-41 (DKLT), 61-62 (DI), 81-85 (FAAET), and T100. T85 serves as a coordination point for substrate. T125 serves as a coordination point for substrate. Residue D126 is the Proton donor of the active site. Active-site proton acceptor residues include E127 and Y149. Residue 149–153 (YSASK) coordinates NAD(+). Substrate is bound at residue N178. N179 lines the NAD(+) pocket. Substrate is bound by residues 188–189 (KI), 204–206 (PLY), R213, N248, and 271–275 (DRKGH).

It belongs to the NAD(P)-dependent epimerase/dehydratase family. dTDP-glucose dehydratase subfamily. NAD(+) is required as a cofactor.

The enzyme catalyses dTDP-alpha-D-glucose = dTDP-4-dehydro-6-deoxy-alpha-D-glucose + H2O. It functions in the pathway antibiotic biosynthesis. In terms of biological role, involved in the biosynthesis of the two 2,6-deoxysugars, dTDP-L-oleandrose and dTDP-D-desosamine, attached to the macrolactone ring oleandolide to produce the aglycone antibiotic oleandomycin. Catalyzes the dehydration of dTDP-D-glucose to form dTDP-6-deoxy-D-xylo-4-hexulose via a three-step process involving oxidation, dehydration and reduction. The chain is dTDP-glucose 4,6-dehydratase from Streptomyces antibioticus.